The sequence spans 332 residues: Packaging enzyme P4 (332 aa).

The tract at residues 111–138 (RWPSEGIYSGVTALMGATGSGKSITLNE) is involved in the regulation and mechanisms of transcription, replication and genome packaging. 126-133 (GATGSGKS) provides a ligand contact to ATP. The tract at residues 310-332 (LERGSVDTDDRNSAPRRGANFSL) is disordered. A compositionally biased stretch (basic and acidic residues) spans 313–322 (GSVDTDDRNS).

Homohexamer. Part of the packaging complex composed of RDRP, P4 and P7.

Its subcellular location is the virion. It catalyses the reaction a ribonucleoside 5'-triphosphate + H2O = a ribonucleoside 5'-diphosphate + phosphate + H(+). Packaging motor with helicase and translocase activities. Part of the packaging complex that packages the viral RNA segments, replicate them into a double-stranded form and transcribe them. is one of the structural proteins of the polyhedral procapsid, which is responsible for genomic replication and transcription. Displays single-stranded RNA-stimulated NTPase activity. This chain is Packaging enzyme P4 (P4), found in Pseudomonas savastanoi pv. phaseolicola (Pseudomonas syringae pv. phaseolicola).